We begin with the raw amino-acid sequence, 467 residues long: Asparagine--tRNA ligase (467 aa).

The protein belongs to the class-II aminoacyl-tRNA synthetase family. In terms of assembly, homodimer.

It localises to the cytoplasm. The enzyme catalyses tRNA(Asn) + L-asparagine + ATP = L-asparaginyl-tRNA(Asn) + AMP + diphosphate + H(+). The sequence is that of Asparagine--tRNA ligase from Legionella pneumophila (strain Lens).